Consider the following 396-residue polypeptide: Alpha-galactosidase 2 (396 aa).

The N-terminal stretch at Met1 to Gly25 is a signal peptide. Disulfide bonds link Cys52-Cys84 and Cys132-Cys163. A glycan (N-linked (GlcNAc...) asparagine) is linked at Asn55. Residues Asp82–Asp83 and Lys159 contribute to the substrate site. Asp161 serves as the catalytic Nucleophile. Residues Glu194 to Glu198, Arg212, and Asp216 each bind substrate. Catalysis depends on Asp216, which acts as the Proton donor. Residues Asn343 and Asn354 are each glycosylated (N-linked (GlcNAc...) asparagine).

Belongs to the glycosyl hydrolase 27 family. Homodimer.

It localises to the secreted. The protein localises to the cell wall. Its subcellular location is the extracellular space. It is found in the apoplast. The enzyme catalyses Hydrolysis of terminal, non-reducing alpha-D-galactose residues in alpha-D-galactosides, including galactose oligosaccharides, galactomannans and galactolipids.. Functionally, may regulate leaf (and possibly other organ) development by functioning in cell wall loosening and cell wall expansion. This chain is Alpha-galactosidase 2, found in Arabidopsis thaliana (Mouse-ear cress).